The sequence spans 162 residues: Methyl-coenzyme M reductase II operon protein D (162 aa).

In terms of assembly, MCR is composed of three subunits: alpha, beta, and gamma. The function of protein D is not known.

The protein is Methyl-coenzyme M reductase II operon protein D (mrtD) of Methanothermobacter thermautotrophicus (strain ATCC 29096 / DSM 1053 / JCM 10044 / NBRC 100330 / Delta H) (Methanobacterium thermoautotrophicum).